Reading from the N-terminus, the 101-residue chain is NAD(P)H-quinone oxidoreductase subunit 4L, chloroplastic (101 aa).

3 consecutive transmembrane segments (helical) span residues 2–22, 32–52, and 61–81; these read MLEH…YGLI, MCLE…SDLF, and VFSI…PAIV.

The protein belongs to the complex I subunit 4L family. As to quaternary structure, NDH is composed of at least 16 different subunits, 5 of which are encoded in the nucleus.

The protein localises to the plastid. It is found in the chloroplast thylakoid membrane. It carries out the reaction a plastoquinone + NADH + (n+1) H(+)(in) = a plastoquinol + NAD(+) + n H(+)(out). The catalysed reaction is a plastoquinone + NADPH + (n+1) H(+)(in) = a plastoquinol + NADP(+) + n H(+)(out). Its function is as follows. NDH shuttles electrons from NAD(P)H:plastoquinone, via FMN and iron-sulfur (Fe-S) centers, to quinones in the photosynthetic chain and possibly in a chloroplast respiratory chain. The immediate electron acceptor for the enzyme in this species is believed to be plastoquinone. Couples the redox reaction to proton translocation, and thus conserves the redox energy in a proton gradient. This Nuphar advena (Common spatterdock) protein is NAD(P)H-quinone oxidoreductase subunit 4L, chloroplastic.